The primary structure comprises 280 residues: tRNase Z TRZ1 (280 aa).

Belongs to the RNase Z family. In terms of assembly, homodimer. It depends on Zn(2+) as a cofactor. Requires Ca(2+) as cofactor. Mn(2+) is required as a cofactor. Mg(2+) serves as cofactor.

Its subcellular location is the cytoplasm. It catalyses the reaction Endonucleolytic cleavage of RNA, removing extra 3' nucleotides from tRNA precursor, generating 3' termini of tRNAs. A 3'-hydroxy group is left at the tRNA terminus and a 5'-phosphoryl group is left at the trailer molecule.. Functionally, zinc phosphodiesterase, which displays tRNA 3'-processing endonuclease activity. Involved in tRNA maturation, by removing a 3'-trailer from precursor tRNA. Can use bis-(p-nitophenyl) phosphate (bpNPP) as substrate. Involved in the processing of small nucleolar RNAs (snoRNAs). This Arabidopsis thaliana (Mouse-ear cress) protein is tRNase Z TRZ1.